Reading from the N-terminus, the 222-residue chain is Glutathione S-transferase (222 aa).

In terms of domain architecture, GST N-terminal spans 3 to 83; that stretch reads GKPKLHYTRG…YIAGKYNLYG (81 aa). Glutathione contacts are provided by residues Tyr9, Arg45, 54-55, and 67-68; these read QV and QS. In terms of domain architecture, GST C-terminal spans 85–208; the sequence is DLKERAWIDM…QPGSQRKPPL (124 aa).

Belongs to the GST superfamily. Alpha family. In terms of assembly, homodimer.

The protein resides in the cytoplasm. It catalyses the reaction RX + glutathione = an S-substituted glutathione + a halide anion + H(+). Functionally, conjugation of reduced glutathione to a wide number of exogenous and endogenous hydrophobic electrophiles. The protein is Glutathione S-transferase of Gallus gallus (Chicken).